The primary structure comprises 229 residues: Orotidine 5'-phosphate decarboxylase (229 aa).

Substrate contacts are provided by residues Asp11, Lys33, Asp60–Thr69, Thr119, Arg180, Gln189, Gly209, and Arg210. Residue Lys62 is the Proton donor of the active site.

Belongs to the OMP decarboxylase family. Type 1 subfamily. In terms of assembly, homodimer.

It catalyses the reaction orotidine 5'-phosphate + H(+) = UMP + CO2. Its pathway is pyrimidine metabolism; UMP biosynthesis via de novo pathway; UMP from orotate: step 2/2. Catalyzes the decarboxylation of orotidine 5'-monophosphate (OMP) to uridine 5'-monophosphate (UMP). The chain is Orotidine 5'-phosphate decarboxylase from Dichelobacter nodosus (strain VCS1703A).